The following is a 217-amino-acid chain: Ribonuclease HII (217 aa).

Residues 26 to 215 enclose the RNase H type-2 domain; that stretch reads EIVCGVDEAG…VREALDLMAG (190 aa). Residues D32, E33, and D124 each coordinate a divalent metal cation.

It belongs to the RNase HII family. The cofactor is Mn(2+). Requires Mg(2+) as cofactor.

The protein localises to the cytoplasm. The enzyme catalyses Endonucleolytic cleavage to 5'-phosphomonoester.. Its function is as follows. Endonuclease that specifically degrades the RNA of RNA-DNA hybrids. The protein is Ribonuclease HII of Burkholderia ambifaria (strain ATCC BAA-244 / DSM 16087 / CCUG 44356 / LMG 19182 / AMMD) (Burkholderia cepacia (strain AMMD)).